Reading from the N-terminus, the 803-residue chain is Leucine--tRNA ligase (803 aa).

The 'HIGH' region motif lies at 40-51 (PYPSGQGLHVGH). The 'KMSKS' region motif lies at 575–579 (KMSKS). Lysine 578 contributes to the ATP binding site.

Belongs to the class-I aminoacyl-tRNA synthetase family.

It is found in the cytoplasm. It catalyses the reaction tRNA(Leu) + L-leucine + ATP = L-leucyl-tRNA(Leu) + AMP + diphosphate. In Lacticaseibacillus paracasei (strain ATCC 334 / BCRC 17002 / CCUG 31169 / CIP 107868 / KCTC 3260 / NRRL B-441) (Lactobacillus paracasei), this protein is Leucine--tRNA ligase.